We begin with the raw amino-acid sequence, 164 residues long: UPF0303 protein RHECIAT_CH0003058 (164 aa).

Belongs to the UPF0303 family.

This Rhizobium etli (strain CIAT 652) protein is UPF0303 protein RHECIAT_CH0003058.